A 77-amino-acid polypeptide reads, in one-letter code: Epoxide hydrolase (77 aa).

As to quaternary structure, monomer.

It catalyses the reaction an epoxide + H2O = an ethanediol. Its function is as follows. This enzyme acts on aliphatic epoxides. Its substrates include epichlorohydrin, epibromohydrin, epoxyoctane and styrene epoxide. The protein is Epoxide hydrolase of Pseudomonas sp. (strain AD1).